The following is a 306-amino-acid chain: UDP-N-acetylenolpyruvoylglucosamine reductase (306 aa).

The 165-residue stretch at 34–198 (VGGPADLLIT…LEVTFKLHNS (165 aa)) folds into the FAD-binding PCMH-type domain. Arg177 is a catalytic residue. Ser227 acts as the Proton donor in catalysis. Residue Glu297 is part of the active site.

Belongs to the MurB family. It depends on FAD as a cofactor.

It localises to the cytoplasm. The enzyme catalyses UDP-N-acetyl-alpha-D-muramate + NADP(+) = UDP-N-acetyl-3-O-(1-carboxyvinyl)-alpha-D-glucosamine + NADPH + H(+). Its pathway is cell wall biogenesis; peptidoglycan biosynthesis. Cell wall formation. The protein is UDP-N-acetylenolpyruvoylglucosamine reductase of Clostridium botulinum (strain Okra / Type B1).